Here is a 242-residue protein sequence, read N- to C-terminus: Biosynthetic peptidoglycan transglycosylase (242 aa).

The chain crosses the membrane as a helical span at residues 12-32; sequence LLLWLIALSVLLVLLLRWVPP.

It belongs to the glycosyltransferase 51 family.

The protein localises to the cell inner membrane. It carries out the reaction [GlcNAc-(1-&gt;4)-Mur2Ac(oyl-L-Ala-gamma-D-Glu-L-Lys-D-Ala-D-Ala)](n)-di-trans,octa-cis-undecaprenyl diphosphate + beta-D-GlcNAc-(1-&gt;4)-Mur2Ac(oyl-L-Ala-gamma-D-Glu-L-Lys-D-Ala-D-Ala)-di-trans,octa-cis-undecaprenyl diphosphate = [GlcNAc-(1-&gt;4)-Mur2Ac(oyl-L-Ala-gamma-D-Glu-L-Lys-D-Ala-D-Ala)](n+1)-di-trans,octa-cis-undecaprenyl diphosphate + di-trans,octa-cis-undecaprenyl diphosphate + H(+). The protein operates within cell wall biogenesis; peptidoglycan biosynthesis. Its function is as follows. Peptidoglycan polymerase that catalyzes glycan chain elongation from lipid-linked precursors. The polypeptide is Biosynthetic peptidoglycan transglycosylase (Stutzerimonas stutzeri (strain A1501) (Pseudomonas stutzeri)).